The sequence spans 794 residues: Phenylalanine--tRNA ligase beta subunit (794 aa).

The tRNA-binding domain occupies 40 to 158; it reads NSLNSELVLG…LKKYLGKDVK (119 aa). One can recognise a B5 domain in the interval 402–477; the sequence is KNKTEFEIKI…RLYSYDNIQE (76 aa). Residues aspartate 455, aspartate 461, glutamate 464, and glutamate 465 each contribute to the Mg(2+) site. Residues 702–794 enclose the FDX-ACB domain; the sequence is SKFQSSSRDL…NVKKMKVVIR (93 aa).

It belongs to the phenylalanyl-tRNA synthetase beta subunit family. Type 1 subfamily. Tetramer of two alpha and two beta subunits. It depends on Mg(2+) as a cofactor.

It localises to the cytoplasm. It catalyses the reaction tRNA(Phe) + L-phenylalanine + ATP = L-phenylalanyl-tRNA(Phe) + AMP + diphosphate + H(+). This chain is Phenylalanine--tRNA ligase beta subunit, found in Mycoplasma capricolum subsp. capricolum (strain California kid / ATCC 27343 / NCTC 10154).